The sequence spans 131 residues: Small ribosomal subunit protein uS11 (131 aa).

It belongs to the universal ribosomal protein uS11 family. Part of the 30S ribosomal subunit. Interacts with proteins S7 and S18. Binds to IF-3.

In terms of biological role, located on the platform of the 30S subunit, it bridges several disparate RNA helices of the 16S rRNA. Forms part of the Shine-Dalgarno cleft in the 70S ribosome. This Buchnera aphidicola subsp. Acyrthosiphon pisum (strain 5A) protein is Small ribosomal subunit protein uS11.